The chain runs to 296 residues: Ribosomal RNA small subunit methyltransferase H (296 aa).

S-adenosyl-L-methionine-binding positions include glycine 41 to tyrosine 43, aspartate 59, phenylalanine 86, aspartate 104, and glutamine 111.

The protein belongs to the methyltransferase superfamily. RsmH family.

Its subcellular location is the cytoplasm. The catalysed reaction is cytidine(1402) in 16S rRNA + S-adenosyl-L-methionine = N(4)-methylcytidine(1402) in 16S rRNA + S-adenosyl-L-homocysteine + H(+). Its function is as follows. Specifically methylates the N4 position of cytidine in position 1402 (C1402) of 16S rRNA. The chain is Ribosomal RNA small subunit methyltransferase H from Neorickettsia sennetsu (strain ATCC VR-367 / Miyayama) (Ehrlichia sennetsu).